A 534-amino-acid chain; its full sequence is 26S proteasome non-ATPase regulatory subunit 3 (534 aa).

Residues 1-16 (MKQEGSARRRGADKAK) are compositionally biased toward basic and acidic residues. The interval 1 to 68 (MKQEGSARRR…AAEHSQRELD (68 aa)) is disordered. The span at 17–32 (PPPGGGEQEPPPPPAP) shows a compositional bias: pro residues. Residue Lys38 forms a Glycyl lysine isopeptide (Lys-Gly) (interchain with G-Cter in SUMO1); alternate linkage. Residue Lys38 forms a Glycyl lysine isopeptide (Lys-Gly) (interchain with G-Cter in SUMO2); alternate linkage. Positions 49-61 (GETAGKTAAAAAE) are enriched in low complexity. The 180-residue stretch at 286 to 465 (ARYLYYTGRI…GYVQSKEMID (180 aa)) folds into the PCI domain. Phosphoserine occurs at positions 418 and 430. The interval 500–534 (SYNKDLESAEERREREQQDLEFAKEMAEDDDDSFP) is disordered. The span at 501 to 525 (YNKDLESAEERREREQQDLEFAKEM) shows a compositional bias: basic and acidic residues.

The protein belongs to the proteasome subunit S3 family. Component of the 19S proteasome regulatory particle complex. The 26S proteasome consists of a 20S core particle (CP) and two 19S regulatory subunits (RP). The regulatory particle is made of a lid composed of 9 subunits including PSMD3, a base containing 6 ATPases and few additional components. Interacts with UBQLN1 (via ubiquitin-like domain). Interacts with ERCC6.

Its function is as follows. Component of the 26S proteasome, a multiprotein complex involved in the ATP-dependent degradation of ubiquitinated proteins. This complex plays a key role in the maintenance of protein homeostasis by removing misfolded or damaged proteins, which could impair cellular functions, and by removing proteins whose functions are no longer required. Therefore, the proteasome participates in numerous cellular processes, including cell cycle progression, apoptosis, or DNA damage repair. The protein is 26S proteasome non-ATPase regulatory subunit 3 (PSMD3) of Bos taurus (Bovine).